A 296-amino-acid chain; its full sequence is NAD kinase (296 aa).

Aspartate 74 acts as the Proton acceptor in catalysis. NAD(+) is bound by residues 74 to 75, 148 to 149, arginine 176, aspartate 178, and 189 to 194; these read DG, ND, and TAYALS.

It belongs to the NAD kinase family. Requires a divalent metal cation as cofactor.

It localises to the cytoplasm. It carries out the reaction NAD(+) + ATP = ADP + NADP(+) + H(+). In terms of biological role, involved in the regulation of the intracellular balance of NAD and NADP, and is a key enzyme in the biosynthesis of NADP. Catalyzes specifically the phosphorylation on 2'-hydroxyl of the adenosine moiety of NAD to yield NADP. The protein is NAD kinase of Nitrosomonas eutropha (strain DSM 101675 / C91 / Nm57).